The primary structure comprises 936 residues: Protocadherin alpha-5 (936 aa).

The first 28 residues, 1–28 (MVYSRRGSLGSRLLLLWLLLAYWKAGSG), serve as a signal peptide directing secretion. Residues 29–696 (QLHYSIPEEA…GPEAALVDVN (668 aa)) lie on the Extracellular side of the membrane. 6 Cadherin domains span residues 33–132 (SIPE…PPRF), 156–241 (ASDL…APEF), 242–349 (DKSI…TPEM), 350–454 (AITT…LRAF), 455–564 (AQPQ…APAL), and 580–677 (VPRS…APKA). N-linked (GlcNAc...) asparagine glycans are attached at residues Asn-264, Asn-448, and Asn-547. Residues 697-717 (VYLIIAICAVSSLLVLTLLLY) form a helical membrane-spanning segment. Over 718–936 (TALRCSAQPT…GNSTTDNSDQ (219 aa)) the chain is Cytoplasmic. Disordered regions lie at residues 759 to 793 (SGEA…PDWR), 815 to 875 (RAGP…DKFI), and 887 to 936 (QEPA…NSDQ). PXXP repeat units lie at residues 773 to 776 (PSLP), 785 to 788 (PRQP), 818 to 821 (PGGP), 873 to 876 (KFII), and 877 to 890 (PGSP…QEPA). Positions 773–890 (PSLPQGPTST…AIISIRQEPA (118 aa)) are 5 X 4 AA repeats of P-X-X-P. Over residues 774–786 (SLPQGPTSTDNPR) the composition is skewed to polar residues. The segment covering 895–909 (DKSDFITFGKKEETK) has biased composition (basic and acidic residues).

The protein localises to the cell membrane. In terms of biological role, potential calcium-dependent cell-adhesion protein. May be involved in the establishment and maintenance of specific neuronal connections in the brain. This is Protocadherin alpha-5 (PCDHA5) from Pan troglodytes (Chimpanzee).